Reading from the N-terminus, the 317-residue chain is tRNA dimethylallyltransferase (317 aa).

Position 16–23 (16–23) interacts with ATP; sequence GPTASGKS. 18–23 is a substrate binding site; sequence TASGKS. Interaction with substrate tRNA stretches follow at residues 41 to 44, 165 to 169, and 247 to 252; these read DSAQ, QRIQR, and RCVGYR.

This sequence belongs to the IPP transferase family. Monomer. Mg(2+) is required as a cofactor.

The catalysed reaction is adenosine(37) in tRNA + dimethylallyl diphosphate = N(6)-dimethylallyladenosine(37) in tRNA + diphosphate. Its function is as follows. Catalyzes the transfer of a dimethylallyl group onto the adenine at position 37 in tRNAs that read codons beginning with uridine, leading to the formation of N6-(dimethylallyl)adenosine (i(6)A). The polypeptide is tRNA dimethylallyltransferase (Nitrosomonas europaea (strain ATCC 19718 / CIP 103999 / KCTC 2705 / NBRC 14298)).